The following is a 318-amino-acid chain: Sol locus transcriptional repressor (318 aa).

4 TPR repeats span residues 65–98, 99–132, 133–166, and 167–199; these read ANAYITRERIYFYSRDFELSLRDLLQAIKLRPKT, INDVYSFALSYHILGEPERALKYFLRAVELQPNV, GISYENLAWFYYLTGKYDKAIENFEKAISMGSTN, and SVYRSLGITYAKIGDYKKSEEYLKKALDAEPEK.

Its function is as follows. Transcriptional repressor of the sol locus (adhE/aad, ctfA, ctfB and adc) genes for butanol and acetone formation. This is Sol locus transcriptional repressor (solR) from Clostridium acetobutylicum (strain ATCC 824 / DSM 792 / JCM 1419 / IAM 19013 / LMG 5710 / NBRC 13948 / NRRL B-527 / VKM B-1787 / 2291 / W).